The sequence spans 318 residues: NADH-ubiquinone oxidoreductase chain 1 (318 aa).

The next 8 membrane-spanning stretches (helical) occupy residues 2-22, 68-88, 100-120, 146-166, 171-191, 231-251, 253-273, and 294-314; these read PMANLLLLIVPILIAMAFLML, ITLYITAPTLALTIALLLWTP, LGLLFILATSSLAVYSILWSG, LAIILLSTLLMSGSFNLSTLI, HLWLLLPSWPLAMMWFISTLA, IIMMNTLTTTIFLGTTYDALS, ELYTTYFVTKTLLLTSLFLWI, and LPLTLALLMWYVSMPITISSI.

Belongs to the complex I subunit 1 family. In terms of assembly, core subunit of respiratory chain NADH dehydrogenase (Complex I) which is composed of 45 different subunits.

Its subcellular location is the mitochondrion inner membrane. It catalyses the reaction a ubiquinone + NADH + 5 H(+)(in) = a ubiquinol + NAD(+) + 4 H(+)(out). Its function is as follows. Core subunit of the mitochondrial membrane respiratory chain NADH dehydrogenase (Complex I) which catalyzes electron transfer from NADH through the respiratory chain, using ubiquinone as an electron acceptor. Essential for the catalytic activity and assembly of complex I. In Homo sapiens (Human), this protein is NADH-ubiquinone oxidoreductase chain 1 (MT-ND1).